Reading from the N-terminus, the 141-residue chain is Hemoglobin subunit alpha (141 aa).

One can recognise a Globin domain in the interval V1–R141. At S3 the chain carries Phosphoserine. N6-succinyllysine is present on residues K7 and K11. Position 16 is an N6-acetyllysine; alternate (K16). An N6-succinyllysine; alternate modification is found at K16. The residue at position 24 (Y24) is a Phosphotyrosine. S35 carries the phosphoserine modification. K40 bears the N6-succinyllysine mark. A Phosphoserine modification is found at S49. Residue H58 coordinates O2. Residue H87 coordinates heme b. A Phosphoserine modification is found at S102. Phosphothreonine is present on T108. A Phosphoserine modification is found at S124. 2 positions are modified to phosphothreonine: T134 and T137. S138 carries the phosphoserine modification.

The protein belongs to the globin family. As to quaternary structure, heterotetramer of two alpha chains and two beta chains. In terms of tissue distribution, red blood cells.

Its function is as follows. Involved in oxygen transport from the lung to the various peripheral tissues. Hemopressin acts as an antagonist peptide of the cannabinoid receptor CNR1. Hemopressin-binding efficiently blocks cannabinoid receptor CNR1 and subsequent signaling. The polypeptide is Hemoglobin subunit alpha (HBA) (Hippopotamus amphibius (Hippopotamus)).